Consider the following 216-residue polypeptide: Cytochrome c oxidase assembly protein CtaG (216 aa).

Residues 1 to 23 show a composition bias toward low complexity; the sequence is MTDAPQHPQQPATGTPATPKAAP. The tract at residues 1 to 24 is disordered; the sequence is MTDAPQHPQQPATGTPATPKAAPR. Over 1-26 the chain is Cytoplasmic; sequence MTDAPQHPQQPATGTPATPKAAPRVG. A helical; Signal-anchor for type II membrane protein transmembrane segment spans residues 27–49; the sequence is RDVRIGATCGLLVALMVGAAYAA. The Periplasmic portion of the chain corresponds to 50 to 216; sequence VPFYNWFCRA…SEPDRPGGSI (167 aa).

Belongs to the COX11/CtaG family.

The protein resides in the cell inner membrane. Exerts its effect at some terminal stage of cytochrome c oxidase synthesis, probably by being involved in the insertion of the copper B into subunit I. The sequence is that of Cytochrome c oxidase assembly protein CtaG from Nitrobacter hamburgensis (strain DSM 10229 / NCIMB 13809 / X14).